The sequence spans 259 residues: Hemin import ATP-binding protein HmuV (259 aa).

Residues 2–238 (IEARDLNVSI…ALLSEVFDCQ (237 aa)) form the ABC transporter domain. Position 34 to 41 (34 to 41 (GPNGSGKS)) interacts with ATP.

This sequence belongs to the ABC transporter superfamily. Heme (hemin) importer (TC 3.A.1.14.5) family. In terms of assembly, the complex is composed of two ATP-binding proteins (HmuV), two transmembrane proteins (HmuU) and a solute-binding protein (HmuT).

It is found in the cell inner membrane. In terms of biological role, part of the ABC transporter complex HmuTUV involved in hemin import. Responsible for energy coupling to the transport system. In Chelativorans sp. (strain BNC1), this protein is Hemin import ATP-binding protein HmuV.